The sequence spans 361 residues: DNA double-strand break repair protein Mre11 (361 aa).

4 residues coordinate Mn(2+): Asp-7, His-9, Asp-48, and Asn-83. His-84 serves as the catalytic Proton donor. The Mn(2+) site is built by His-176, His-204, and His-206.

It belongs to the MRE11/RAD32 family. As to quaternary structure, homodimer. Forms a heterotetramer composed of two Mre11 subunits and two Rad50 subunits. Mn(2+) is required as a cofactor.

Nuclease activity is regulated by Rad50. Its function is as follows. Part of the Rad50/Mre11 complex, which is involved in the early steps of DNA double-strand break (DSB) repair. The complex may facilitate opening of the processed DNA ends to aid in the recruitment of HerA and NurA. Mre11 binds to DSB ends and has both double-stranded 3'-5' exonuclease activity and single-stranded endonuclease activity. The sequence is that of DNA double-strand break repair protein Mre11 from Nanoarchaeum equitans (strain Kin4-M).